The following is a 331-amino-acid chain: MALTDRLLDAWYKGHPALTLLRPLESLYRRVVDGKRAKFLAGEGDIYRAPVPVIVVGNITIGGTGKTPLILWMIEHCQRKGLRVGVVSRGYGAKPPSLPWRVQPDQSASEAGDEPLLIVQRSGVPLMIDPDRSRAVQALLAAEPLDLILSDDGLQHYRLARDLELVLIDAARGLGNRRCLPAGPLREPVERLSSVDALLYNGATADRDDGYAFTLKPSALINLRSGERQPVSYFPAGQALHAVAGIGNPQRFFNTLEGLHWRPVTHAFADHALYSVQALTFTPALPLVMTEKDAVKCRAFAADDWWYLAVDAVPSDAFVGWFDEQLLRLSP.

60-67 serves as a coordination point for ATP; sequence TIGGTGKT.

This sequence belongs to the LpxK family.

It carries out the reaction a lipid A disaccharide + ATP = a lipid IVA + ADP + H(+). Its pathway is glycolipid biosynthesis; lipid IV(A) biosynthesis; lipid IV(A) from (3R)-3-hydroxytetradecanoyl-[acyl-carrier-protein] and UDP-N-acetyl-alpha-D-glucosamine: step 6/6. Functionally, transfers the gamma-phosphate of ATP to the 4'-position of a tetraacyldisaccharide 1-phosphate intermediate (termed DS-1-P) to form tetraacyldisaccharide 1,4'-bis-phosphate (lipid IVA). The chain is Tetraacyldisaccharide 4'-kinase from Pseudomonas syringae pv. tomato (strain ATCC BAA-871 / DC3000).